The primary structure comprises 137 residues: Large ribosomal subunit protein uL16 (137 aa).

Belongs to the universal ribosomal protein uL16 family. As to quaternary structure, part of the 50S ribosomal subunit.

Binds 23S rRNA and is also seen to make contacts with the A and possibly P site tRNAs. The sequence is that of Large ribosomal subunit protein uL16 from Ruegeria pomeroyi (strain ATCC 700808 / DSM 15171 / DSS-3) (Silicibacter pomeroyi).